Here is a 222-residue protein sequence, read N- to C-terminus: Endonuclease V (222 aa).

Mg(2+) contacts are provided by D43 and D109.

Belongs to the endonuclease V family. Mg(2+) serves as cofactor.

It localises to the cytoplasm. The enzyme catalyses Endonucleolytic cleavage at apurinic or apyrimidinic sites to products with a 5'-phosphate.. DNA repair enzyme involved in the repair of deaminated bases. Selectively cleaves double-stranded DNA at the second phosphodiester bond 3' to a deoxyinosine leaving behind the intact lesion on the nicked DNA. The protein is Endonuclease V of Roseiflexus sp. (strain RS-1).